A 445-amino-acid chain; its full sequence is MNLNRILQGVNQWLLQTPERSLDEAYHAALKIKEIEDKHFQGRKVANEFSNYGSSTNSYFIAEVKGYLQKIKVRLTEFKASRSIVNTFGPNQPTINNGVITVTTDVCLKKLQFIDSIIGKYQDNYWQEDIQDVPKSIQNRNFEQETAKNKTSRNRSFLAAGSIEDEEIIKSNKSQKATEKPGVLPRSFVNTFNRIKQEIDPQAEESEEAVLKKFRNSRYKTAISLKFILLLIIVPLLTQQLTKTFLITPLVNKYFQQQEQFIFINQDLEEEAFSELRRFEEALHFRGMIGLAPKLSNEEIEGEITKKAAVLSEEFRQRGLNAIANIFADICSLIAFGFVVAFSRREIEIVKSFLDGILYNLSDSAKAFLIILFTDIFVGFHSPHGWEVILEGLSRHFGLPENRQFNFLFIATFPVILDTVLKYWIFRYLNRISPSAVATYRNMNE.

Transmembrane regions (helical) follow at residues 227–247 (FILL…TFLI), 322–342 (AIAN…VVAF), 369–389 (LIIL…WEVI), and 405–425 (FNFL…KYWI).

This sequence belongs to the CemA family.

The protein localises to the cell inner membrane. Required for H(+) efflux immediately after light irradiation to form a rapid H(+) concentration gradient across the thylakoid membranes. Together with PxcL, contributes to transient H(+) uptake following dark to light transition. In Microcystis aeruginosa (strain NIES-843 / IAM M-2473), this protein is Proton extrusion protein PxcA.